We begin with the raw amino-acid sequence, 168 residues long: Photosystem I assembly protein Ycf3 (168 aa).

TPR repeat units lie at residues 35–68 (AFTY…EIDP), 72–105 (SYIL…NPFL), and 120–153 (GEQA…TPGN).

Belongs to the Ycf3 family.

The protein localises to the plastid. The protein resides in the chloroplast thylakoid membrane. In terms of biological role, essential for the assembly of the photosystem I (PSI) complex. May act as a chaperone-like factor to guide the assembly of the PSI subunits. In Calycanthus floridus var. glaucus (Eastern sweetshrub), this protein is Photosystem I assembly protein Ycf3.